Consider the following 601-residue polypeptide: Cdc42-interacting protein 4 (601 aa).

The tract at residues 1–117 (MDWGTELWDQ…EMKQERKMHF (117 aa)) is required for podosome formation and interaction with AKAP9 and microtubules. Positions 1 to 117 (MDWGTELWDQ…EMKQERKMHF (117 aa)) are required for translocation to the plasma membrane in response to insulin. An F-BAR domain is found at 1 to 264 (MDWGTELWDQ…AANAVDPKND (264 aa)). A coiled-coil region spans residues 67 to 259 (FSQQQSFVQI…EGMKVAANAV (193 aa)). Disordered regions lie at residues 280–358 (GDVE…GRDP), 390–420 (DFSHLPPEQQRKRLQQQLEERSRELQKEVDQ), and 479–543 (RGDS…SPIG). The span at 289 to 302 (QPMNRAPSDSSLGT) shows a compositional bias: polar residues. An interaction with CDC42 region spans residues 293-537 (RAPSDSSLGT…TEFDEDFEEE (245 aa)). Residues 293 to 601 (RAPSDSSLGT…PTSYLRVTLN (309 aa)) form an interaction with PDE6G region. Residues Ser296, Ser298, and Ser299 each carry the phosphoserine modification. Over residues 314–329 (GRSRTKRWPFGKKNKP) the composition is skewed to basic residues. Ser335 carries the post-translational modification Phosphoserine. The segment covering 336–346 (PLGGPVPSALP) has biased composition (low complexity). At Ser351 the chain carries Phosphoserine. A coiled-coil region spans residues 388 to 481 (TEDFSHLPPE…ESRVLSNRGD (94 aa)). The 78-residue stretch at 393–470 (HLPPEQQRKR…VQKYEAWLAE (78 aa)) folds into the REM-1 domain. Basic and acidic residues predominate over residues 407-420 (LEERSRELQKEVDQ). The segment at 471 to 601 (AESRVLSNRG…PTSYLRVTLN (131 aa)) is required for interaction with FASLG and localization to lysosomes. At Ser482 the chain carries Phosphoserine. An interaction with DNM2 and WASL region spans residues 487–541 (ARPPDPPASAPPDSSSNSASQDTKESSEEPPSEESQDTPIYTEFDEDFEEEPTSP). The span at 497–506 (PPDSSSNSAS) shows a compositional bias: low complexity. Positions 529-538 (EFDEDFEEEP) are enriched in acidic residues. Positions 529-601 (EFDEDFEEEP…PTSYLRVTLN (73 aa)) are interaction with DNM1 and WASL. A required for podosome formation region spans residues 538–601 (PTSPIGHCVA…PTSYLRVTLN (64 aa)). The 62-residue stretch at 540–601 (SPIGHCVAIY…PTSYLRVTLN (62 aa)) folds into the SH3 domain. The interaction with WAS stretch occupies residues 544 to 601 (HCVAIYHFEGSSEGTISMAEGEDLSLMEEDKGDGWTRVRRKEGGEGYVPTSYLRVTLN). The segment at 546–601 (VAIYHFEGSSEGTISMAEGEDLSLMEEDKGDGWTRVRRKEGGEGYVPTSYLRVTLN) is interaction with ARHGAP17, DAAM1, DIAPH1 and DIAPH2.

The protein belongs to the FNBP1 family. Interacts specifically with GTP-bound RHOQ. Interacts with DNM2 and PDE6G. Homodimerizes, the dimers can polymerize end-to-end to form filamentous structures. Interacts specifically with GTP-bound CDC42. Interacts with AKAP9, ARHGAP17, DAAM1, DIAPH1, DIAPH2, DNM1, FASLG/FASL, GAPVD1, LYN, microtubules, SRC, WAS/WASP and WASL/N-WASP. Interacts with the ligand binding domain of the thyroid receptor (TR) in the presence of thyroid hormone. May interact with CTNNB1 and HD/HTT. Post-translationally, tyrosine phosphorylated. Also phosphorylated by PKA. As to expression, expressed in brain, colon, heart, kidney, liver, lung, megakaryocyte, ovary, pancreas, peripheral blood lymphocytes, placenta, prostate, skeletal muscle, small intestine, spleen, testis, thymus and trachea.

The protein localises to the cytoplasm. It is found in the cytoskeleton. The protein resides in the cell cortex. It localises to the lysosome. Its subcellular location is the golgi apparatus. The protein localises to the cell membrane. It is found in the cell projection. The protein resides in the phagocytic cup. It localises to the perinuclear region. Functionally, required for translocation of GLUT4 to the plasma membrane in response to insulin signaling. Required to coordinate membrane tubulation with reorganization of the actin cytoskeleton during endocytosis. Binds to lipids such as phosphatidylinositol 4,5-bisphosphate and phosphatidylserine and promotes membrane invagination and the formation of tubules. Also promotes CDC42-induced actin polymerization by recruiting WASL/N-WASP which in turn activates the Arp2/3 complex. Actin polymerization may promote the fission of membrane tubules to form endocytic vesicles. Required for the formation of podosomes, actin-rich adhesion structures specific to monocyte-derived cells. May be required for the lysosomal retention of FASLG/FASL. In Homo sapiens (Human), this protein is Cdc42-interacting protein 4 (TRIP10).